A 384-amino-acid chain; its full sequence is Cyclohexane-1-carbonyl-CoA dehydrogenase (384 aa).

It belongs to the acyl-CoA dehydrogenase family. Homotetramer. Requires FAD as cofactor.

It catalyses the reaction cyclohexane-1-carbonyl-CoA + oxidized [electron-transfer flavoprotein] + H(+) = cyclohex-1-ene-1-carbonyl-CoA + reduced [electron-transfer flavoprotein]. Its function is as follows. Mediates the conversion of cyclohexane-1-carbonyl-CoA (ChCoA) into cyclohex-1-ene-1-carbonyl-CoA in biosynthesis of cyclohexane-1-carboxylate, a by-product produced during fermentation of benzoate and crotonate to acetate. The sequence is that of Cyclohexane-1-carbonyl-CoA dehydrogenase from Syntrophus aciditrophicus (strain SB).